Consider the following 305-residue polypeptide: GMP synthase [glutamine-hydrolyzing] subunit B (305 aa).

One can recognise a GMPS ATP-PPase domain in the interval 2 to 184 (VDANAFIDEA…LPLPEEISER (183 aa)). 29 to 35 (SGGVDSS) is an ATP binding site.

Heterodimer composed of a glutamine amidotransferase subunit (A) and a GMP-binding subunit (B).

It carries out the reaction XMP + L-glutamine + ATP + H2O = GMP + L-glutamate + AMP + diphosphate + 2 H(+). The protein operates within purine metabolism; GMP biosynthesis; GMP from XMP (L-Gln route): step 1/1. In terms of biological role, catalyzes the synthesis of GMP from XMP. The polypeptide is GMP synthase [glutamine-hydrolyzing] subunit B (Methanocella arvoryzae (strain DSM 22066 / NBRC 105507 / MRE50)).